A 710-amino-acid polypeptide reads, in one-letter code: Solute carrier organic anion transporter family member 3A1 (710 aa).

Met1 carries the N-acetylmethionine modification. Positions 1-15 (MQGKKPGGSSGGGRS) are enriched in gly residues. A disordered region spans residues 1-25 (MQGKKPGGSSGGGRSGELQGDEAQR). The Cytoplasmic segment spans residues 1–40 (MQGKKPGGSSGGGRSGELQGDEAQRNKKKKKKVSCFSNIK). The chain crosses the membrane as a helical span at residues 41-60 (IFLVSECALMLAQGTVGAYL). At 61-79 (VSVLTTLERRFNLQSADVG) the chain is on the extracellular side. A helical membrane pass occupies residues 80 to 100 (VIASSFEIGNLALILFVSYFG). Residues 101–106 (ARGHRP) lie on the Cytoplasmic side of the membrane. Residues 107–131 (RLIGCGGIVMALGALLSALPEFLTH) form a helical membrane-spanning segment. Topologically, residues 132 to 174 (QYKYEAGEIRWGAEGRDVCATNGSSSDEGPDPDLICRNRTATN) are extracellular. N-linked (GlcNAc...) asparagine glycosylation is found at Asn153 and Asn169. A helical transmembrane segment spans residues 175–203 (MMYLLLIGAQVLLGIGATPVQPLGVSYID). Topologically, residues 204 to 222 (DHVRRKDSSLYIGILFTML) are cytoplasmic. A helical membrane pass occupies residues 223–243 (VFGPACGFILGSFCTKIYVDA). Residues 244–261 (VFIDTSNLDITPDDPRWI) lie on the Extracellular side of the membrane. A helical transmembrane segment spans residues 262 to 286 (GAWWGGFLLCGALLFFSSLLMFGFP). Topologically, residues 287-344 (QSLPPHSEPGMESEQAMLPEREYERPKPSNGVLRHPLEPDSSASCFQQLRVIPKVTKH) are cytoplasmic. A helical transmembrane segment spans residues 345-366 (LLSNPVFTCIVLAACMEIAVVA). Residues 367–386 (GFAAFLGKYLEQQFNLTTSS) are Extracellular-facing. Asn381 is a glycosylation site (N-linked (GlcNAc...) asparagine). The chain crosses the membrane as a helical span at residues 387 to 410 (ANQLLGMTAIPCACLGIFLGGLLV). Residues 411 to 414 (KKLS) are Cytoplasmic-facing. The helical transmembrane segment at 415–438 (LSALGAIRMAMLVNLVSTACYVSF) threads the bilayer. The Extracellular segment spans residues 439–539 (LFLGCDTVPV…PGCQEAFLTF (101 aa)). N-linked (GlcNAc...) asparagine glycosylation is present at Asn457. Residues 465–513 (LDPYSPCNNNCECQTDSFTPVCGADGITYLSACFAGCNSTNLTGCACLT) form the Kazal-like domain. 3 disulfides stabilise this stretch: Cys471–Cys501, Cys477–Cys497, and Cys486–Cys511. N-linked (GlcNAc...) asparagine glycans are attached at residues Asn502, Asn505, and Asn519. The helical transmembrane segment at 540–562 (LCVMCVCSLIGAMAQTPSVIILI) threads the bilayer. Residues 563-571 (RTVSPELKS) are Cytoplasmic-facing. A helical transmembrane segment spans residues 572–597 (YALGVLFLLLRLLGFIPPPLIFGAGI). At 598–630 (DSTCLFWSTFCGEQGACVLYDNVVYRYLYVSIA) the chain is on the extracellular side. A helical transmembrane segment spans residues 631–648 (IALKSFAFILYTTTWQCL). Topologically, residues 649–705 (RKNYKRYIKNHEGGLSTSEFLASTLTLDNLGRDPVPAHQTHRTKFIYNLEDHEWCEN) are cytoplasmic.

The protein belongs to the organo anion transporter (TC 2.A.60) family. In terms of tissue distribution, expressed in many brain regions, including frontal cortex, brain stem and cerebellum. Associated with neuronal bodies in a punctated matter. Detected at the arcuate nucleus and the choroid plexus (at protein level). Little expression, if any, in oligodendrocytes. In the cardiovascular system, detected in cardiac muscle cells and endothelial cells of aorta, coronary artery and left ventricular endocardium (at protein level). In the respiratory system, detected in alveolar epithelial cells and in mucosal epithelium of the trachea (at protein level). In the reproductive system, detected in spermatozoa, oocytes, smooth muscle cells of the ovary, epithelium of the glandula uterine, smooth muscle cells of the myometrium and epithelium of the endometrium (at protein level). In the kidney, detected in afferent and efferent arterioles, and the epithelium of distal tubules and collecting tubules (at protein level).

The protein resides in the basolateral cell membrane. Its subcellular location is the apical cell membrane. The protein localises to the basal cell membrane. The catalysed reaction is L-thyroxine(out) = L-thyroxine(in). It carries out the reaction prostaglandin E1(out) = prostaglandin E1(in). It catalyses the reaction prostaglandin E2(out) = prostaglandin E2(in). The enzyme catalyses prostaglandin F2alpha(out) = prostaglandin F2alpha(in). The catalysed reaction is (5Z,8Z,11Z,14Z)-eicosatetraenoate(out) = (5Z,8Z,11Z,14Z)-eicosatetraenoate(in). It carries out the reaction taurocholate(out) = taurocholate(in). It catalyses the reaction glycocholate(out) = glycocholate(in). The enzyme catalyses estrone 3-sulfate(out) = estrone 3-sulfate(in). The catalysed reaction is argipressin(out) = argipressin(in). Functionally, putative organic anion antiporter with apparent broad substrate specificity. Recognizes various substrates including thyroid hormone L-thyroxine, prostanoids such as prostaglandin E1 and E2, bile acids such as taurocholate, glycolate and glycochenodeoxycholate and peptide hormones such as L-arginine vasopressin, likely operating in a tissue-specific manner. The transport mechanism, its electrogenicity and potential tissue-specific counterions remain to be elucidated. The protein is Solute carrier organic anion transporter family member 3A1 (Slco3a1) of Rattus norvegicus (Rat).